The sequence spans 800 residues: Phenylalanine--tRNA ligase beta subunit (800 aa).

Residues 39–148 form the tRNA-binding domain; that stretch reads TAALAPFVVG…ADTPVGVPLV (110 aa). Positions 402–478 constitute a B5 domain; it reads VWRRTIALRP…RLHGFDLVPA (77 aa). Positions 456, 462, 465, and 466 each coordinate Mg(2+). The region spanning 706–799 is the FDX-ACB domain; that stretch reads SPFQPVARDF…VTKLTGGSLR (94 aa).

It belongs to the phenylalanyl-tRNA synthetase beta subunit family. Type 1 subfamily. In terms of assembly, tetramer of two alpha and two beta subunits. Requires Mg(2+) as cofactor.

The protein localises to the cytoplasm. It carries out the reaction tRNA(Phe) + L-phenylalanine + ATP = L-phenylalanyl-tRNA(Phe) + AMP + diphosphate + H(+). The chain is Phenylalanine--tRNA ligase beta subunit from Rhodospirillum rubrum (strain ATCC 11170 / ATH 1.1.1 / DSM 467 / LMG 4362 / NCIMB 8255 / S1).